The sequence spans 155 residues: NADPH-dependent 7-cyano-7-deazaguanine reductase (155 aa).

The Thioimide intermediate role is filled by Cys53. Asp60 serves as the catalytic Proton donor. Substrate-binding positions include 75 to 77 (VES) and 94 to 95 (HE).

The protein belongs to the GTP cyclohydrolase I family. QueF type 1 subfamily.

The protein localises to the cytoplasm. The enzyme catalyses 7-aminomethyl-7-carbaguanine + 2 NADP(+) = 7-cyano-7-deazaguanine + 2 NADPH + 3 H(+). Its pathway is tRNA modification; tRNA-queuosine biosynthesis. Functionally, catalyzes the NADPH-dependent reduction of 7-cyano-7-deazaguanine (preQ0) to 7-aminomethyl-7-deazaguanine (preQ1). This chain is NADPH-dependent 7-cyano-7-deazaguanine reductase, found in Brucella abortus (strain S19).